The primary structure comprises 264 residues: Thymidylate synthase (264 aa).

Residue Arg-21 participates in dUMP binding. Residue His-51 participates in (6R)-5,10-methylene-5,6,7,8-tetrahydrofolate binding. DUMP is bound at residue 126-127 (RR). The active-site Nucleophile is Cys-146. DUMP-binding positions include 166–169 (RSAD), Asn-177, and 207–209 (HLY). Asp-169 provides a ligand contact to (6R)-5,10-methylene-5,6,7,8-tetrahydrofolate. A (6R)-5,10-methylene-5,6,7,8-tetrahydrofolate-binding site is contributed by Ala-263.

Belongs to the thymidylate synthase family. Bacterial-type ThyA subfamily. In terms of assembly, homodimer.

The protein localises to the cytoplasm. The enzyme catalyses dUMP + (6R)-5,10-methylene-5,6,7,8-tetrahydrofolate = 7,8-dihydrofolate + dTMP. Its pathway is pyrimidine metabolism; dTTP biosynthesis. Catalyzes the reductive methylation of 2'-deoxyuridine-5'-monophosphate (dUMP) to 2'-deoxythymidine-5'-monophosphate (dTMP) while utilizing 5,10-methylenetetrahydrofolate (mTHF) as the methyl donor and reductant in the reaction, yielding dihydrofolate (DHF) as a by-product. This enzymatic reaction provides an intracellular de novo source of dTMP, an essential precursor for DNA biosynthesis. The protein is Thymidylate synthase of Bdellovibrio bacteriovorus (strain ATCC 15356 / DSM 50701 / NCIMB 9529 / HD100).